The chain runs to 944 residues: Valine--tRNA ligase (944 aa).

Positions 43-53 (PNVTGTLHMGH) match the 'HIGH' region motif. The 'KMSKS' region signature appears at 550–554 (KMSKS). K553 contacts ATP. Residues 878–944 (LVDMDAERTR…TGLREQRAKL (67 aa)) adopt a coiled-coil conformation.

This sequence belongs to the class-I aminoacyl-tRNA synthetase family. ValS type 1 subfamily. Monomer.

Its subcellular location is the cytoplasm. The catalysed reaction is tRNA(Val) + L-valine + ATP = L-valyl-tRNA(Val) + AMP + diphosphate. Catalyzes the attachment of valine to tRNA(Val). As ValRS can inadvertently accommodate and process structurally similar amino acids such as threonine, to avoid such errors, it has a 'posttransfer' editing activity that hydrolyzes mischarged Thr-tRNA(Val) in a tRNA-dependent manner. This is Valine--tRNA ligase from Xanthomonas campestris pv. campestris (strain 8004).